The sequence spans 102 residues: PqqA binding protein (102 aa).

The protein belongs to the PqqD family. In terms of assembly, monomer. Interacts with PqqE.

It functions in the pathway cofactor biosynthesis; pyrroloquinoline quinone biosynthesis. In terms of biological role, functions as a PqqA binding protein and presents PqqA to PqqE, in the pyrroloquinoline quinone (PQQ) biosynthetic pathway. The protein is PqqA binding protein of Rhodopseudomonas palustris (strain ATCC BAA-98 / CGA009).